We begin with the raw amino-acid sequence, 162 residues long: 3-hydroxyacyl-[acyl-carrier-protein] dehydratase FabZ (162 aa).

The active site involves histidine 49.

This sequence belongs to the thioester dehydratase family. FabZ subfamily.

The protein resides in the cytoplasm. It carries out the reaction a (3R)-hydroxyacyl-[ACP] = a (2E)-enoyl-[ACP] + H2O. Involved in unsaturated fatty acids biosynthesis. Catalyzes the dehydration of short chain beta-hydroxyacyl-ACPs and long chain saturated and unsaturated beta-hydroxyacyl-ACPs. This Solibacter usitatus (strain Ellin6076) protein is 3-hydroxyacyl-[acyl-carrier-protein] dehydratase FabZ.